The sequence spans 298 residues: GTPase Era (298 aa).

The Era-type G domain maps to 4-171 (RAGFVALIGR…KEKIVSFLPE (168 aa)). Residues 12–19 (GRTNVGKS) are G1. 12–19 (GRTNVGKS) provides a ligand contact to GTP. The tract at residues 38–42 (QTTRN) is G2. Positions 59-62 (DTPG) are G3. GTP contacts are provided by residues 59-63 (DTPGI) and 121-124 (NKID). A G4 region spans residues 121–124 (NKID). The interval 150–152 (ISA) is G5. The region spanning 202–280 (LEEEVPHGVY…FLQLWVKVRK (79 aa)) is the KH type-2 domain.

This sequence belongs to the TRAFAC class TrmE-Era-EngA-EngB-Septin-like GTPase superfamily. Era GTPase family. As to quaternary structure, monomer.

The protein localises to the cytoplasm. It is found in the cell membrane. In terms of biological role, an essential GTPase that binds both GDP and GTP, with rapid nucleotide exchange. Plays a role in 16S rRNA processing and 30S ribosomal subunit biogenesis and possibly also in cell cycle regulation and energy metabolism. This chain is GTPase Era, found in Caldanaerobacter subterraneus subsp. tengcongensis (strain DSM 15242 / JCM 11007 / NBRC 100824 / MB4) (Thermoanaerobacter tengcongensis).